A 538-amino-acid polypeptide reads, in one-letter code: Histone-arginine methyltransferase CARMER (538 aa).

Residues 148-457 (ASQYFQFYGY…QSYDVTIDLH (310 aa)) enclose the SAM-dependent MTase PRMT-type domain. Q161, R170, G194, E216, E245, and T273 together coordinate S-adenosyl-L-methionine. The residue at position 508 (R508) is an Asymmetric dimethylarginine; by autocatalysis.

This sequence belongs to the class I-like SAM-binding methyltransferase superfamily. Protein arginine N-methyltransferase family. In terms of assembly, homodimer. In terms of processing, the dimethylated protein is the major form.

The protein localises to the cytoplasm. The protein resides in the nucleus. The enzyme catalyses L-arginyl-[protein] + 2 S-adenosyl-L-methionine = N(omega),N(omega)-dimethyl-L-arginyl-[protein] + 2 S-adenosyl-L-homocysteine + 2 H(+). Methylates (mono- and asymmetric dimethylation) the guanidino nitrogens of arginyl residues in proteins. May methylate histone H3 at 'Arg-17' and activate transcription via chromatin remodeling. The chain is Histone-arginine methyltransferase CARMER (Art4) from Drosophila virilis (Fruit fly).